The chain runs to 299 residues: uncharacterized protein (299 aa).

This sequence belongs to the glycosyltransferase 2 family.

This is an uncharacterized protein from Mycoplasma pneumoniae (strain ATCC 29342 / M129 / Subtype 1) (Mycoplasmoides pneumoniae).